The primary structure comprises 145 residues: Large ribosomal subunit protein uL13 (145 aa).

Belongs to the universal ribosomal protein uL13 family. As to quaternary structure, part of the 50S ribosomal subunit.

Its function is as follows. This protein is one of the early assembly proteins of the 50S ribosomal subunit, although it is not seen to bind rRNA by itself. It is important during the early stages of 50S assembly. The chain is Large ribosomal subunit protein uL13 from Macrococcus caseolyticus (strain JCSC5402) (Macrococcoides caseolyticum).